The sequence spans 472 residues: Alanine--anticapsin ligase (472 aa).

Glu-109 lines the Mg(2+) pocket. ATP-binding residues include Lys-138 and Lys-178. One can recognise an ATP-grasp domain in the interval 142-355; the sequence is RDAFNKAGVK…MAQLLLDVLC (214 aa). Residue Leu-182 participates in Mg(2+) binding. ATP contacts are provided by residues 184 to 185, 226 to 229, and Gln-268; these read SS and EEFL. Substrate contacts are provided by residues Glu-273 and 309–311; that span reads HTE. 2 residues coordinate Mg(2+): Glu-311 and Glu-324. 328 to 331 serves as a coordination point for substrate; the sequence is RFAG.

In terms of assembly, monomer or homodimer. It depends on Mg(2+) as a cofactor.

It catalyses the reaction L-anticapsin + L-alanine + ATP = bacilysin + ADP + phosphate + H(+). It functions in the pathway antibiotic biosynthesis; bacilysin biosynthesis. Part of the bacABCDEFG operon responsible for the biosynthesis of bacilysin, an irreversible inactivator of the glutaminase domain of glucosamine synthetase. Catalyzes the formation of alpha-dipeptides from various L-amino acids in the presence of ATP. In vivo catalyzes the ligation of L-alanine and L-anticapsin (epoxycyclohexanonyl-Ala) to produce the final bacilysin antibiotic (L-Ala-L-4S-cyclohexenonyl-Ala dipeptide). The substrate specificity is restricted to small amino acids such as L-Ala, for the N-terminal end of the dipeptide, whereas a wide range of hydrophobic amino acids such as L-Phe, L-Tyr and L-Met are recognized for the C-terminal end. This is Alanine--anticapsin ligase from Bacillus subtilis (strain 168).